A 112-amino-acid chain; its full sequence is cAMP-regulated phosphoprotein 19 (112 aa).

A compositionally biased stretch (low complexity) spans 1–11 (MSAESPEPASA). A disordered region spans residues 1–48 (MSAESPEPASAEEQKEMEDKVISPEKAEEAKLKARYPHLGQKPGGSDF). Residue S2 is modified to N-acetylserine. Basic and acidic residues predominate over residues 12–32 (EEQKEMEDKVISPEKAEEAKL). Phosphoserine; by GWL is present on residues S62 and S104. Residues 73–112 (KNKQLPTAAPDKTEVTGDHIPTPQDLPQRKPSLVASKLAG) are disordered. Phosphoserine; by PKA is present on S104.

It belongs to the endosulfine family. Interacts (when phosphorylated at Ser-62) with PPP2R2D. In terms of processing, phosphorylation at Ser-62 by MASTL/GWL during mitosis is essential for interaction with PPP2R2D (PR55-delta) and subsequent inactivation of PP2A.

It localises to the cytoplasm. Functionally, protein phosphatase inhibitor that specifically inhibits protein phosphatase 2A (PP2A) during mitosis. Inhibition of PP2A is enhanced when ARPP19 is phosphorylated. When phosphorylated at Ser-62 during mitosis, specifically interacts with PPP2R2D (PR55-delta) and inhibits its activity, leading to inactivation of PP2A, an essential condition to keep cyclin-B1-CDK1 activity high during M phase. The protein is cAMP-regulated phosphoprotein 19 (ARPP19) of Gallus gallus (Chicken).